A 344-amino-acid chain; its full sequence is Arginine N-succinyltransferase (344 aa).

A succinyl-CoA-binding site is contributed by L125. Residue H229 is the Proton donor of the active site.

This sequence belongs to the arginine N-succinyltransferase family.

The catalysed reaction is succinyl-CoA + L-arginine = N(2)-succinyl-L-arginine + CoA + H(+). It participates in amino-acid degradation; L-arginine degradation via AST pathway; L-glutamate and succinate from L-arginine: step 1/5. Its function is as follows. Catalyzes the transfer of succinyl-CoA to arginine to produce N(2)-succinylarginine. The chain is Arginine N-succinyltransferase from Shigella sonnei (strain Ss046).